A 319-amino-acid chain; its full sequence is Thioredoxin reductase (319 aa).

FAD-binding positions include 11 to 14 (SGPA), 40 to 41 (IA), Gln-45, Asn-54, Val-87, Cys-145, Asp-288, and 295 to 297 (RQA). An intrachain disulfide couples Cys-142 to Cys-145.

This sequence belongs to the class-II pyridine nucleotide-disulfide oxidoreductase family. As to quaternary structure, homodimer. Requires FAD as cofactor.

It is found in the cytoplasm. It catalyses the reaction [thioredoxin]-dithiol + NADP(+) = [thioredoxin]-disulfide + NADPH + H(+). The protein is Thioredoxin reductase (TRR1) of Yarrowia lipolytica (strain CLIB 122 / E 150) (Yeast).